Consider the following 328-residue polypeptide: MSEAAGEIRNDWSVEEIVTLHNLPLLELIGHANAVHGRHHNPNVVQKASLLSIKTGGCPEDCAYCPQSAHHREVKLTKDRLMQPETVLALAKRAKDAGAERFCMGAAWRQVRDGKEFDAVLTMVRGVRDLGMEACVTLGMLEKHQAEKLAEAGLTAYNHNLDTSPEFYGEIITTRSYADRLETLSIVRSFGIDLCCGGIIGMGETIRDRASMLQVLASMRPHPESVPINALVPVEGTPLAAMPRIDPLELVRMVATARIVMPKSTVRLSAGRSTLNREAQILCLVSGANSVFYGDTLLTTPNAGIGEDEALFAAIGALPHEAAPLAAE.

One can recognise a Radical SAM core domain in the interval 43–272 (NVVQKASLLS…KSTVRLSAGR (230 aa)). [4Fe-4S] cluster is bound by residues Cys-58, Cys-62, and Cys-65. Positions 103, 135, 195, and 267 each coordinate [2Fe-2S] cluster.

This sequence belongs to the radical SAM superfamily. Biotin synthase family. Homodimer. [4Fe-4S] cluster is required as a cofactor. Requires [2Fe-2S] cluster as cofactor.

The enzyme catalyses (4R,5S)-dethiobiotin + (sulfur carrier)-SH + 2 reduced [2Fe-2S]-[ferredoxin] + 2 S-adenosyl-L-methionine = (sulfur carrier)-H + biotin + 2 5'-deoxyadenosine + 2 L-methionine + 2 oxidized [2Fe-2S]-[ferredoxin]. Its pathway is cofactor biosynthesis; biotin biosynthesis; biotin from 7,8-diaminononanoate: step 2/2. Its function is as follows. Catalyzes the conversion of dethiobiotin (DTB) to biotin by the insertion of a sulfur atom into dethiobiotin via a radical-based mechanism. The polypeptide is Biotin synthase (Allorhizobium ampelinum (strain ATCC BAA-846 / DSM 112012 / S4) (Agrobacterium vitis (strain S4))).